A 123-amino-acid polypeptide reads, in one-letter code: Immunoglobulin lambda variable 5-39 (123 aa).

Residues 1–19 form the signal peptide; sequence MAWTPLLLLLLSHCTGSLS. Positions 20 to 44 are framework-1; that stretch reads QPVLTQPTSLSASPGASARFTCTLR. The Ig-like domain maps to 21-123; sequence PVLTQPTSLS…YCAIWYSSTS (103 aa). Cys-41 and Cys-115 form a disulfide bridge. The tract at residues 45–53 is complementarity-determining-1; that stretch reads SGINVGTYR. Residues 54–70 are framework-2; sequence IYWYQQKPGSLPRYLLR. Positions 71 to 77 are complementarity-determining-2; it reads YKSDSDK. A framework-3 region spans residues 78–115; the sequence is QQGSGVPSRFSGSKDASTNAGLLLISGLQSEDEADYYC. The complementarity-determining-3 stretch occupies residues 116-123; sequence AIWYSSTS.

Immunoglobulins are composed of two identical heavy chains and two identical light chains; disulfide-linked.

Its subcellular location is the secreted. The protein resides in the cell membrane. In terms of biological role, v region of the variable domain of immunoglobulin light chains that participates in the antigen recognition. Immunoglobulins, also known as antibodies, are membrane-bound or secreted glycoproteins produced by B lymphocytes. In the recognition phase of humoral immunity, the membrane-bound immunoglobulins serve as receptors which, upon binding of a specific antigen, trigger the clonal expansion and differentiation of B lymphocytes into immunoglobulins-secreting plasma cells. Secreted immunoglobulins mediate the effector phase of humoral immunity, which results in the elimination of bound antigens. The antigen binding site is formed by the variable domain of one heavy chain, together with that of its associated light chain. Thus, each immunoglobulin has two antigen binding sites with remarkable affinity for a particular antigen. The variable domains are assembled by a process called V-(D)-J rearrangement and can then be subjected to somatic hypermutations which, after exposure to antigen and selection, allow affinity maturation for a particular antigen. This chain is Immunoglobulin lambda variable 5-39, found in Homo sapiens (Human).